A 468-amino-acid polypeptide reads, in one-letter code: Aldehyde dehydrogenase family 3 member B1 (468 aa).

Met1 carries the N-acetylmethionine modification. 188–193 (GNTYVG) serves as a coordination point for NAD(+). Catalysis depends on residues Glu210 and Cys244. 2 S-palmitoyl cysteine lipidation sites follow: Cys462 and Cys463. Position 465 is a cysteine methyl ester (Cys465). Cys465 carries S-geranylgeranyl cysteine lipidation. The propeptide at 466 to 468 (TLL) is removed in mature form.

The protein belongs to the aldehyde dehydrogenase family. Post-translationally, dually lipidated in the C-terminus; prenylation occurs prior to, and is a prerequisite for palmitoylation. It is also required for activity towards long-chain substrates.

Its subcellular location is the cell membrane. It carries out the reaction an aldehyde + NAD(+) + H2O = a carboxylate + NADH + 2 H(+). The catalysed reaction is a long-chain fatty aldehyde + NAD(+) + H2O = a long-chain fatty acid + NADH + 2 H(+). The enzyme catalyses a medium-chain fatty aldehyde + NAD(+) + H2O = a medium-chain fatty acid + NADH + 2 H(+). It catalyses the reaction octanal + NAD(+) + H2O = octanoate + NADH + 2 H(+). It carries out the reaction nonanal + NAD(+) + H2O = nonanoate + NADH + 2 H(+). The catalysed reaction is hexadecanoate + NADH + 2 H(+) = hexadecanal + NAD(+) + H2O. The enzyme catalyses (2E)-octenal + NAD(+) + H2O = (2E)-octenoate + NADH + 2 H(+). It catalyses the reaction (E)-non-2-enal + NAD(+) + H2O = (E)-non-2-enoate + NADH + 2 H(+). It carries out the reaction (E)-4-hydroxynon-2-enal + NAD(+) + H2O = (E)-4-hydroxynon-2-enoate + NADH + 2 H(+). The catalysed reaction is (2E)-hexadecenal + NAD(+) + H2O = (E)-hexadec-2-enoate + NADH + 2 H(+). The enzyme catalyses benzaldehyde + NAD(+) + H2O = benzoate + NADH + 2 H(+). It catalyses the reaction an aldehyde + NADP(+) + H2O = a carboxylate + NADPH + 2 H(+). It carries out the reaction a medium-chain fatty aldehyde + NADP(+) + H2O = a medium-chain fatty acid + NADPH + 2 H(+). The catalysed reaction is hexanal + NADP(+) + H2O = hexanoate + NADPH + 2 H(+). The enzyme catalyses octanal + NADP(+) + H2O = octanoate + NADPH + 2 H(+). It catalyses the reaction nonanal + NADP(+) + H2O = nonanoate + NADPH + 2 H(+). It carries out the reaction (2E)-octenal + NADP(+) + H2O = (2E)-octenoate + NADPH + 2 H(+). The catalysed reaction is (E)-non-2-enal + NADP(+) + H2O = (E)-non-2-enoate + NADPH + 2 H(+). The enzyme catalyses (E)-4-hydroxynon-2-enal + NADP(+) + H2O = (E)-4-hydroxynon-2-enoate + NADPH + 2 H(+). It catalyses the reaction benzaldehyde + NADP(+) + H2O = benzoate + NADPH + 2 H(+). It participates in alcohol metabolism; ethanol degradation; acetate from ethanol: step 2/2. Oxidizes medium and long chain saturated and unsaturated fatty aldehydes generated in the plasma membrane into non-toxic fatty acids. May have a protective role against the cytotoxicity induced by lipid peroxidation. Short-chain fatty aldehydes are not good substrates. Can use both NADP(+) and NAD(+) as electron acceptor in vitro, however in vivo preference will depend on their tissue levels. Low activity towards acetaldehyde and 3,4-dihydroxyphenylacetaldehyde. Able to metabolize aromatic aldehydes such as benzaldehyde to their acid form. In Rattus norvegicus (Rat), this protein is Aldehyde dehydrogenase family 3 member B1 (Aldh3b1).